The sequence spans 313 residues: Olfactory receptor 1J4 (313 aa).

Over 1–25 (MKRENQSSVSEFLLLDLPIWPEQQA) the chain is Extracellular. N5 is a glycosylation site (N-linked (GlcNAc...) asparagine). Residues 26–49 (VFFTLFLGMYLITVLGNLLIILLI) traverse the membrane as a helical segment. The Cytoplasmic portion of the chain corresponds to 50–57 (RLDSHLHT). A helical membrane pass occupies residues 58-79 (PMFFFLSHLALTDISLSSVTVP). The Extracellular portion of the chain corresponds to 80 to 100 (KMLLSMQTQDQSILYAGCVTQ). C97 and C189 are oxidised to a cystine. Residues 101–120 (MYFFIFFTDLDNFLLTSMAY) form a helical membrane-spanning segment. The Cytoplasmic segment spans residues 121–139 (DRYVAICHPLRYTTIMKEG). The helical transmembrane segment at 140–158 (LCNLLVTVSWILSCTNALS) threads the bilayer. Topologically, residues 159-195 (HTLLLAQLSFCADNTIPHFFCDLVALLKLSCSDISLN) are extracellular. A helical transmembrane segment spans residues 196 to 219 (ELVIFTVGQAVITLPLICILISYG). The Cytoplasmic portion of the chain corresponds to 220 to 236 (HIGVTILKAPSTKGIFK). Residues 237-259 (ALSTCGSHLSVVSLYYGTIIGLY) traverse the membrane as a helical segment. At 260 to 272 (FLPSSSASSDKDV) the chain is on the extracellular side. Residues 273 to 292 (IASVMYTVITPLLNPFIYSL) form a helical membrane-spanning segment. The Cytoplasmic portion of the chain corresponds to 293-313 (RNRDIKGALERLFNRATVLSQ).

This sequence belongs to the G-protein coupled receptor 1 family.

The protein resides in the cell membrane. Odorant receptor. The polypeptide is Olfactory receptor 1J4 (OR1J4) (Homo sapiens (Human)).